A 179-amino-acid polypeptide reads, in one-letter code: MSRIGKKPIELPANVTCERTGNAIKVAGPRGELTTIIPEKVEVVMDQTKVLVKRHSDSREDRSYHGLVRTLIQNMITGVSTGYEKSLEIVGVGFKAEAEGRNLKLTIGYSSPIIYAVPEGIDLKIEKATNIILSGIDKEKVGKVAAEIRRIKKPEPYKGKGIKYANEQVRRKVGKSVGA.

This sequence belongs to the universal ribosomal protein uL6 family. As to quaternary structure, part of the 50S ribosomal subunit.

In terms of biological role, this protein binds to the 23S rRNA, and is important in its secondary structure. It is located near the subunit interface in the base of the L7/L12 stalk, and near the tRNA binding site of the peptidyltransferase center. The sequence is that of Large ribosomal subunit protein uL6 from Syntrophus aciditrophicus (strain SB).